The following is a 141-amino-acid chain: Nucleoside diphosphate kinase (141 aa).

The ATP site is built by Lys-11, Tyr-59, Arg-87, Thr-93, Arg-104, and Asn-114. The active-site Pros-phosphohistidine intermediate is the His-117.

Belongs to the NDK family. As to quaternary structure, homotetramer. Requires Mg(2+) as cofactor.

Its subcellular location is the cytoplasm. It carries out the reaction a 2'-deoxyribonucleoside 5'-diphosphate + ATP = a 2'-deoxyribonucleoside 5'-triphosphate + ADP. It catalyses the reaction a ribonucleoside 5'-diphosphate + ATP = a ribonucleoside 5'-triphosphate + ADP. Its function is as follows. Major role in the synthesis of nucleoside triphosphates other than ATP. The ATP gamma phosphate is transferred to the NDP beta phosphate via a ping-pong mechanism, using a phosphorylated active-site intermediate. This Orientia tsutsugamushi (strain Boryong) (Rickettsia tsutsugamushi) protein is Nucleoside diphosphate kinase.